Reading from the N-terminus, the 283-residue chain is Vitamin K epoxide reductase homolog (283 aa).

Over 1–20 (MASYLKLKAQEETWLQRHSR) the chain is Cytoplasmic. The helical transmembrane segment at 21 to 41 (LILAILAGLGSLLTAYLTYTK) threads the bilayer. The Periplasmic portion of the chain corresponds to 42–66 (LTEQPAAFCTGDGGCDLVLSSRWAE). A disulfide bridge links C50 with C56. Residue 59–65 (VLSSRWA) coordinates a quinone. The helical transmembrane segment at 67-87 (FLGIPTAAVGLLGFLGVLALA) threads the bilayer. Residues 88–102 (VLPDGLPLVKRWRWP) are Cytoplasmic-facing. A helical transmembrane segment spans residues 103 to 123 (ALFGLVSAMTAFEMYMLYLMV). 111-122 (MTAFEMYMLYLM) serves as a coordination point for a quinone. Topologically, residues 124-128 (AVLRQ) are periplasmic. Residues 129 to 149 (FCMYCTTAIILVAGLGLVTVL) traverse the membrane as a helical segment. A disulfide bridge links C130 with C133. The Cytoplasmic portion of the chain corresponds to 150-158 (GHRWLDGGK). A helical membrane pass occupies residues 159 to 179 (LAFSYILVAFLTLVTTIGVYA). Residues 180–283 (NQVPPPSPLA…ASGYPLEEGR (104 aa)) are Periplasmic-facing. The segment at 186–283 (SPLAVGLAAH…ASGYPLEEGR (98 aa)) is thioredoxin-like domain. Intrachain disulfides connect C209-C212 and C231-C244.

The protein belongs to the VKOR family.

It localises to the membrane. Inhibited by ferulenol. Its function is as follows. Thiol-disulfide oxidoreductase that catalyzes vitamin K-dependent disulfide bond formation in periplasmic target proteins. In Synechococcus sp. (strain JA-2-3B'a(2-13)) (Cyanobacteria bacterium Yellowstone B-Prime), this protein is Vitamin K epoxide reductase homolog.